A 286-amino-acid chain; its full sequence is CCR4-NOT transcription complex subunit 7 (286 aa).

Residues aspartate 40, glutamate 42, aspartate 161, aspartate 230, and glutamate 278 each contribute to the a divalent metal cation site.

The protein belongs to the CAF1 family. Component of the CCR4-NOT complex. Requires Mn(2+) as cofactor. Mg(2+) is required as a cofactor. It depends on Co(2+) as a cofactor.

It is found in the nucleus. The protein localises to the cytoplasm. The catalysed reaction is Exonucleolytic cleavage of poly(A) to 5'-AMP.. Functionally, has 3'-5' poly(A) exoribonuclease activity for synthetic poly(A) RNA substrate. Catalytic component of the CCR4-NOT complex which is one of the major cellular mRNA deadenylases and is linked to various cellular processes including bulk mRNA degradation, miRNA-mediated repression, translational repression during translational initiation and general transcription regulation. During miRNA-mediated repression the complex also seems to act as translational repressor during translational initiation. Additional complex functions may be a consequence of its influence on mRNA expression. The chain is CCR4-NOT transcription complex subunit 7 (cnot7) from Danio rerio (Zebrafish).